We begin with the raw amino-acid sequence, 893 residues long: DNA gyrase subunit A (893 aa).

The Topo IIA-type catalytic domain occupies 35–501; that stretch reads LPDVRDGLKP…GLEDLEDEDL (467 aa). The active-site O-(5'-phospho-DNA)-tyrosine intermediate is the tyrosine 123. The GyrA-box motif lies at 528–534; the sequence is QNRGGRG. The segment at 810–893 is disordered; that stretch reads VNEEDDNEEN…ASDNEEDSDE (84 aa). Composition is skewed to acidic residues over residues 812–821 and 852–862; these read EEDDNEENAD and DAEMESVESPE. Over residues 863 to 879 the composition is skewed to basic and acidic residues; that stretch reads NDDRIDIRQDFMDRVNE. Residues 880 to 893 are compositionally biased toward acidic residues; sequence DIESASDNEEDSDE.

Belongs to the type II topoisomerase GyrA/ParC subunit family. Heterotetramer, composed of two GyrA and two GyrB chains. In the heterotetramer, GyrA contains the active site tyrosine that forms a transient covalent intermediate with DNA, while GyrB binds cofactors and catalyzes ATP hydrolysis.

It localises to the cytoplasm. The catalysed reaction is ATP-dependent breakage, passage and rejoining of double-stranded DNA.. Functionally, a type II topoisomerase that negatively supercoils closed circular double-stranded (ds) DNA in an ATP-dependent manner to modulate DNA topology and maintain chromosomes in an underwound state. Negative supercoiling favors strand separation, and DNA replication, transcription, recombination and repair, all of which involve strand separation. Also able to catalyze the interconversion of other topological isomers of dsDNA rings, including catenanes and knotted rings. Type II topoisomerases break and join 2 DNA strands simultaneously in an ATP-dependent manner. The sequence is that of DNA gyrase subunit A from Staphylococcus epidermidis (strain ATCC 12228 / FDA PCI 1200).